The following is a 398-amino-acid chain: Argininosuccinate synthase (398 aa).

Ala-8–Thr-16 lines the ATP pocket. An L-citrulline-binding site is contributed by Tyr-87. Gly-117 lines the ATP pocket. Positions 119, 123, and 124 each coordinate L-aspartate. Position 123 (Asn-123) interacts with L-citrulline. Arg-127, Ser-175, Glu-259, and Tyr-271 together coordinate L-citrulline.

This sequence belongs to the argininosuccinate synthase family. Type 1 subfamily. As to quaternary structure, homotetramer.

Its subcellular location is the cytoplasm. It catalyses the reaction L-citrulline + L-aspartate + ATP = 2-(N(omega)-L-arginino)succinate + AMP + diphosphate + H(+). Its pathway is amino-acid biosynthesis; L-arginine biosynthesis; L-arginine from L-ornithine and carbamoyl phosphate: step 2/3. This Corynebacterium jeikeium (strain K411) protein is Argininosuccinate synthase.